The chain runs to 445 residues: Phosphoglucosamine mutase (445 aa).

Catalysis depends on serine 102, which acts as the Phosphoserine intermediate. Positions 102, 241, 243, and 245 each coordinate Mg(2+). Serine 102 carries the phosphoserine modification.

This sequence belongs to the phosphohexose mutase family. It depends on Mg(2+) as a cofactor. Activated by phosphorylation.

The catalysed reaction is alpha-D-glucosamine 1-phosphate = D-glucosamine 6-phosphate. Functionally, catalyzes the conversion of glucosamine-6-phosphate to glucosamine-1-phosphate. The sequence is that of Phosphoglucosamine mutase from Aliivibrio salmonicida (strain LFI1238) (Vibrio salmonicida (strain LFI1238)).